Here is a 1195-residue protein sequence, read N- to C-terminus: MSQKDIYNKYSNQSADDQQEEDDDENQESSCQLSPEKDLGESLQGEDLDEDQGVIGEDDEEQEESYDEEDEEEDDEENNQDQQNNSESNLQYDKTNQKNQQTEMTDNQNEFLAEDYLSQIKTNEKSELKYQLDIQSNLSGENVQDMDEKLKQYIELNGKNENQQAAESKKIENDEIMKKSEENVHEKVVDNNQKLNIQQNNINDYQEDIKKDQSNNLVDIQQNNEIIKEVNSEDQQQKNEMDNKQSDIVLAQEESKQSEQVEAPIVKQKKIELRPKVIYDPKNDVDQYTGDYSDSGESDEEANNEDDDEDEDDESENESRSRKNKAQLLKKKNNKKEQAKKQQVKKVYKKQTLVLNVADTKYPVVKFVGKKIFKWKLAYDMESMDFDIFWTDNAVQPEQLGRMQPYQKINHFPGMFSLARKNHLARNLMKMRKQFPDQYKFFPQTWLLPAEYNDFKNQFEKSRSQQKIFIVKPEASCQGRGIFLTRSLDDLNPSDHYVVQRYLNKPYLIDGLKFDFRLYVLLAGCDPLRIYLYYEGLTRFATEKYQEVNRDNIEDMCMHLTNYAINKDNPNFKFNKDKEKMDVGHKRSLTSVLQLLEDQGHDVNKLWKDIKRVLIKTIISAQPTLAHHYKSCQPDNFMNNMCFEILGFDIILDSHLKPWVLEVNHTPSFSTDTPLDSYIKKNTIRDSLKLMNCTCKAKNEIINQRKEIMQKRVLTGKKVKYTPEEKLEEIKKAQQKRDEYEDKHLGGFERIFPMEDDEDDNFTEYMQYALKCYEEQTGANIRRNTKKVTEDPKKITNQPKKLNQPKDLEKIYNTKIGAKLPPRKPNSQTTINKGIPGQNGQRPSSSQLNEEGETIQCEDQEQNKDEAIENAITRSASGRMHDFRIKKQNSPYNIHQKFKNKIQNRVAIGVKELKLAEEPFQFEENINGKPSNPNVKKIQAYITSEKEQLEIKNMNILQDQNYNSSRAVQAKKPQIEPQVLFVQEPQTKKLQILNQAKPPQQKLQFQLIDNTAAQMEEERRQWLIQAQRNLQYQLSQQQYQPQQKLTLLPKGPPIHPQTNVMQSIADIPNSSNSKEILAAVGGAISGQYKTDKRVTIKQKGQIQNQSINQLKDNNGLFLQPKLFEIQSFQSSQQQQAQQAIQSSLDQNLIGINQNMVGLNDLFVSGKSHKVQPHYQAQQDSYSYQKHNSYSNYYQK.

A disordered region spans residues 1–110 (MSQKDIYNKY…QTEMTDNQNE (110 aa)). 2 stretches are compositionally biased toward acidic residues: residues 17 to 27 (DQQEEDDDENQ) and 44 to 79 (QGED…EENN). 2 coiled-coil regions span residues 59–103 (DEEQ…QQTE) and 144–260 (QDMD…QSEQ). Residues 80-89 (QDQQNNSESN) are compositionally biased toward low complexity. Over residues 90–110 (LQYDKTNQKNQQTEMTDNQNE) the composition is skewed to polar residues. Residues 281–343 (PKNDVDQYTG…NKKEQAKKQQ (63 aa)) are disordered. Residues 294–316 (DSGESDEEANNEDDDEDEDDESE) are compositionally biased toward acidic residues. Over residues 322-334 (RKNKAQLLKKKNN) the composition is skewed to basic residues. Residues 350–703 (KQTLVLNVAD…TCKAKNEIIN (354 aa)) form the TTL domain. ATP is bound by residues 500–503 (QRYL), Lys-513, and Asp-515. The tract at residues 674–756 (PLDSYIKKNT…GFERIFPMED (83 aa)) is c-MTBD region. Residues 783-862 (RNTKKVTEDP…ETIQCEDQEQ (80 aa)) form a disordered region. Residues 825–849 (PNSQTTINKGIPGQNGQRPSSSQLN) are compositionally biased toward polar residues. Acidic residues predominate over residues 850–860 (EEGETIQCEDQ).

It is found in the cytoplasm. The protein resides in the cytoskeleton. The protein localises to the cell projection. It localises to the cilium. Its subcellular location is the cilium basal body. Functionally, probable tubulin polyglutamylase with a strong preference for beta-tubulin. The sequence is that of Probable beta-tubulin polyglutamylase (Ttll6a) from Tetrahymena thermophila (strain SB210).